Consider the following 251-residue polypeptide: Ribosomal RNA small subunit methyltransferase J (251 aa).

S-adenosyl-L-methionine is bound by residues 100–101 (RD), 116–117 (ER), and D170.

It belongs to the methyltransferase superfamily. RsmJ family.

Its subcellular location is the cytoplasm. It carries out the reaction guanosine(1516) in 16S rRNA + S-adenosyl-L-methionine = N(2)-methylguanosine(1516) in 16S rRNA + S-adenosyl-L-homocysteine + H(+). Functionally, specifically methylates the guanosine in position 1516 of 16S rRNA. This Actinobacillus pleuropneumoniae serotype 5b (strain L20) protein is Ribosomal RNA small subunit methyltransferase J.